Here is a 258-residue protein sequence, read N- to C-terminus: MLMVISPAKTLDFASPLATERFTQPALLAESQKLINVARKLSPADIASLMHISDKLAVLNAERFNDWQPAFTPDNARQAILAFKGDVYTGLQAETFGEEDFTFAQQHLRMLSGLYGLLRPLDLMQAYRLEMGIKLANPAGKDLYSFWGDKLTTALNEALAQQGDNLLINLASDEYFRSVKPKRLEADIIKPVFLDEKNGKFKVISFYAKKARGLMCRYIIQNRLTKVEQLKKFDLDGYAFDGDTSSNNELVFKRREMA.

This sequence belongs to the UPF0246 family.

This Erwinia tasmaniensis (strain DSM 17950 / CFBP 7177 / CIP 109463 / NCPPB 4357 / Et1/99) protein is UPF0246 protein ETA_07010.